The following is a 443-amino-acid chain: Endoplasmic reticulum protein SC65 (443 aa).

The N-terminal stretch at Met1–Ala18 is a signal peptide. The interval Ser81–Gly102 is disordered. Asn367 carries an N-linked (GlcNAc...) asparagine glycan. Composition is skewed to acidic residues over residues Asp387–Pro398, Ala407–Leu419, and Gly431–Ala443. Residues Asp387–Ala443 form a disordered region.

The protein belongs to the leprecan family. As to quaternary structure, interacts with PLOD1, P3H3 and PPIB. Identified in a complex with PLOD1 and P3H3. As to expression, found in testis, brain, heart and at a much lower level in liver.

The protein resides in the endoplasmic reticulum. Part of a complex composed of PLOD1, P3H3 and P3H4 that catalyzes hydroxylation of lysine residues in collagen alpha chains and is required for normal assembly and cross-linking of collagen fibrils. Required for normal bone density and normal skin stability via its role in hydroxylation of lysine residues in collagen alpha chains and in collagen fibril assembly. This Rattus norvegicus (Rat) protein is Endoplasmic reticulum protein SC65.